Reading from the N-terminus, the 160-residue chain is Deoxyuridine 5'-triphosphate nucleotidohydrolase (160 aa).

Residues 79–81 (RSG), Asn92, 96–98 (TVD), and Lys106 each bind substrate.

Belongs to the dUTPase family. It depends on Mg(2+) as a cofactor.

It catalyses the reaction dUTP + H2O = dUMP + diphosphate + H(+). The protein operates within pyrimidine metabolism; dUMP biosynthesis; dUMP from dCTP (dUTP route): step 2/2. Its function is as follows. This enzyme is involved in nucleotide metabolism: it produces dUMP, the immediate precursor of thymidine nucleotides and it decreases the intracellular concentration of dUTP so that uracil cannot be incorporated into DNA. In Rhizobium meliloti (strain 1021) (Ensifer meliloti), this protein is Deoxyuridine 5'-triphosphate nucleotidohydrolase.